The chain runs to 490 residues: MRTNPLVLGVSALVEKNVGYIAQIIGPVLDVSFSPGYMPNIYNSLKVQGQGTAGQEIQVTCEVQQLLGNHKVRAVAMSATDGLTRGMTVIDTGAPLSVPVGGATLGRIFNVLGEPVDNLGPVDARITSPIHRTAPAFTELDTKLSIFETGIKVVDLLAPYRRGGKIGLFGGAGVGKTVLIMELINNIAKAHGGVSVFGGVGERTREGNDLYMEMKESGVIDEQKISESKVALVYGQMNEPPGARMRVGLTALTMAEYFRDVNEQDVLLFIDNIFRFVQAGSEVSALLGRMPSAVGYQPTLSTEMGSLQERITSTKKGSITSIQAVYVPADDLTDPAPATTFAHLDATTVLSRGLAAKGIYPAVDPLDSTSTMLQPWIVGEEHYETAQGVKQTLQRYKELQDIIAIPGLDELSEEDRLIVARARKIERFLSQPFFVAEVFTGSPGKYVGLMETIRGFQMILSGELDGLTEQSFYLVGNIDEATVRLNSTGK.

Residue 170–177 coordinates ATP; it reads GGAGVGKT.

The protein belongs to the ATPase alpha/beta chains family. F-type ATPases have 2 components, CF(1) - the catalytic core - and CF(0) - the membrane proton channel. CF(1) has five subunits: alpha(3), beta(3), gamma(1), delta(1), epsilon(1). CF(0) has four main subunits: a(1), b(1), b'(1) and c(9-12).

The protein resides in the plastid. The protein localises to the chloroplast thylakoid membrane. It catalyses the reaction ATP + H2O + 4 H(+)(in) = ADP + phosphate + 5 H(+)(out). Its function is as follows. Produces ATP from ADP in the presence of a proton gradient across the membrane. The catalytic sites are hosted primarily by the beta subunits. The protein is ATP synthase subunit beta, chloroplastic of Pinus koraiensis (Korean pine).